A 116-amino-acid polypeptide reads, in one-letter code: Large ribosomal subunit protein uL18 (116 aa).

This sequence belongs to the universal ribosomal protein uL18 family. Part of the 50S ribosomal subunit; part of the 5S rRNA/L5/L18/L25 subcomplex. Contacts the 5S and 23S rRNAs.

Functionally, this is one of the proteins that bind and probably mediate the attachment of the 5S RNA into the large ribosomal subunit, where it forms part of the central protuberance. The sequence is that of Large ribosomal subunit protein uL18 from Pseudomonas putida (strain GB-1).